The following is a 172-amino-acid chain: NADH-quinone oxidoreductase subunit B (172 aa).

[4Fe-4S] cluster contacts are provided by C42, C43, C107, and C136.

The protein belongs to the complex I 20 kDa subunit family. As to quaternary structure, NDH-1 is composed of 14 different subunits. Subunits NuoB, C, D, E, F, and G constitute the peripheral sector of the complex. It depends on [4Fe-4S] cluster as a cofactor.

It localises to the cell inner membrane. It carries out the reaction a quinone + NADH + 5 H(+)(in) = a quinol + NAD(+) + 4 H(+)(out). Its function is as follows. NDH-1 shuttles electrons from NADH, via FMN and iron-sulfur (Fe-S) centers, to quinones in the respiratory chain. The immediate electron acceptor for the enzyme in this species is believed to be ubiquinone. Couples the redox reaction to proton translocation (for every two electrons transferred, four hydrogen ions are translocated across the cytoplasmic membrane), and thus conserves the redox energy in a proton gradient. In Sulfurovum sp. (strain NBC37-1), this protein is NADH-quinone oxidoreductase subunit B.